A 327-amino-acid chain; its full sequence is Zinc transport protein ZntB (327 aa).

Topologically, residues 1 to 273 (MEAIKGSEVN…ARRTYTMSLM (273 aa)) are cytoplasmic. Residues 274–294 (AMVFLPSTFLTGLFGVNLGGI) form a helical membrane-spanning segment. Over 295–300 (PGGAWH) the chain is Periplasmic. A helical membrane pass occupies residues 301 to 321 (FGFSMFCILLVVLIGGVTLWL). Over 322–327 (HRSKWL) the chain is Cytoplasmic.

It belongs to the CorA metal ion transporter (MIT) (TC 1.A.35) family.

Its subcellular location is the cell inner membrane. The catalysed reaction is Zn(2+)(out) + H(+)(out) = Zn(2+)(in) + H(+)(in). Its function is as follows. Zinc transporter. Acts as a Zn(2+):proton symporter, which likely mediates zinc ion uptake. This is Zinc transport protein ZntB from Citrobacter koseri (strain ATCC BAA-895 / CDC 4225-83 / SGSC4696).